We begin with the raw amino-acid sequence, 372 residues long: Queuine tRNA-ribosyltransferase (372 aa).

The active-site Proton acceptor is Asp-93. Residues 93–97, Asp-147, Gln-190, and Gly-217 contribute to the substrate site; that span reads DSGGF. The segment at 248–254 is RNA binding; it reads GVGSPDC. The Nucleophile role is filled by Asp-267. An RNA binding; important for wobble base 34 recognition region spans residues 272 to 276; sequence TRMAR. Cys-305, Cys-307, Cys-310, and His-336 together coordinate Zn(2+).

This sequence belongs to the queuine tRNA-ribosyltransferase family. In terms of assembly, homodimer. Within each dimer, one monomer is responsible for RNA recognition and catalysis, while the other monomer binds to the replacement base PreQ1. It depends on Zn(2+) as a cofactor.

The catalysed reaction is 7-aminomethyl-7-carbaguanine + guanosine(34) in tRNA = 7-aminomethyl-7-carbaguanosine(34) in tRNA + guanine. Its pathway is tRNA modification; tRNA-queuosine biosynthesis. Catalyzes the base-exchange of a guanine (G) residue with the queuine precursor 7-aminomethyl-7-deazaguanine (PreQ1) at position 34 (anticodon wobble position) in tRNAs with GU(N) anticodons (tRNA-Asp, -Asn, -His and -Tyr). Catalysis occurs through a double-displacement mechanism. The nucleophile active site attacks the C1' of nucleotide 34 to detach the guanine base from the RNA, forming a covalent enzyme-RNA intermediate. The proton acceptor active site deprotonates the incoming PreQ1, allowing a nucleophilic attack on the C1' of the ribose to form the product. After dissociation, two additional enzymatic reactions on the tRNA convert PreQ1 to queuine (Q), resulting in the hypermodified nucleoside queuosine (7-(((4,5-cis-dihydroxy-2-cyclopenten-1-yl)amino)methyl)-7-deazaguanosine). This is Queuine tRNA-ribosyltransferase from Desulforudis audaxviator (strain MP104C).